Consider the following 375-residue polypeptide: Circadian-associated transcriptional repressor (375 aa).

Over residues 1-32 (MDSPSSVSSYSSSSLSPSFSTSSVNSDFSFPS) the composition is skewed to low complexity. Disordered stretches follow at residues 1–102 (MDSP…LNTQ), 192–218 (KSSS…AASP), and 351–375 (DREM…DPQP). The span at 33–46 (DNEREGKGTHELRP) shows a compositional bias: basic and acidic residues.

In terms of assembly, interacts with BMAL1, PER2, CRY2, BHLHE41, HDAC1 NR3C1.

The protein resides in the nucleus. Its subcellular location is the PML body. Its function is as follows. Transcriptional repressor which forms a negative regulatory component of the circadian clock and acts independently of the circadian transcriptional repressors: CRY1, CRY2 and BHLHE41. In a histone deacetylase-dependent manner represses the transcriptional activator activity of the CLOCK-BMAL1 heterodimer. Abrogates the interaction of BMAL1 with the transcriptional coactivator CREBBP and can repress the histone acetyl-transferase activity of the CLOCK-BMAL1 heterodimer, reducing histone acetylation of its target genes. Rhythmically binds the E-box elements (5'-CACGTG-3') on circadian gene promoters and its occupancy shows circadian oscillation antiphasic to BMAL1. Interacts with the glucocorticoid receptor (NR3C1) and contributes to the repressive function in the glucocorticoid response. The polypeptide is Circadian-associated transcriptional repressor (Ciart) (Mus musculus (Mouse)).